The sequence spans 208 residues: Holliday junction resolvase RecU (208 aa).

Mg(2+) contacts are provided by T87, D89, E102, and Q121.

This sequence belongs to the RecU family. The cofactor is Mg(2+).

Its subcellular location is the cytoplasm. It carries out the reaction Endonucleolytic cleavage at a junction such as a reciprocal single-stranded crossover between two homologous DNA duplexes (Holliday junction).. In terms of biological role, endonuclease that resolves Holliday junction intermediates in genetic recombination. Cleaves mobile four-strand junctions by introducing symmetrical nicks in paired strands. Promotes annealing of linear ssDNA with homologous dsDNA. Required for DNA repair, homologous recombination and chromosome segregation. This chain is Holliday junction resolvase RecU, found in Staphylococcus aureus (strain Mu3 / ATCC 700698).